Reading from the N-terminus, the 62-residue chain is Large ribosomal subunit protein uL29 (62 aa).

This sequence belongs to the universal ribosomal protein uL29 family.

This chain is Large ribosomal subunit protein uL29, found in Geobacter metallireducens (strain ATCC 53774 / DSM 7210 / GS-15).